The primary structure comprises 217 residues: 3,4-dihydroxy-2-butanone 4-phosphate synthase (217 aa).

D-ribulose 5-phosphate contacts are provided by residues 37–38 (RE), Asp42, 150–154 (RGGHT), and Glu174. Glu38 lines the Mg(2+) pocket. His153 contributes to the Mg(2+) binding site.

It belongs to the DHBP synthase family. In terms of assembly, homodimer. It depends on Mg(2+) as a cofactor. The cofactor is Mn(2+).

It catalyses the reaction D-ribulose 5-phosphate = (2S)-2-hydroxy-3-oxobutyl phosphate + formate + H(+). It functions in the pathway cofactor biosynthesis; riboflavin biosynthesis; 2-hydroxy-3-oxobutyl phosphate from D-ribulose 5-phosphate: step 1/1. Catalyzes the conversion of D-ribulose 5-phosphate to formate and 3,4-dihydroxy-2-butanone 4-phosphate. This is 3,4-dihydroxy-2-butanone 4-phosphate synthase from Klebsiella pneumoniae subsp. pneumoniae (strain ATCC 700721 / MGH 78578).